Reading from the N-terminus, the 315-residue chain is Ribosomal RNA small subunit methyltransferase H (315 aa).

Residues 34–36 (GGH), Asp53, Asp100, and His107 contribute to the S-adenosyl-L-methionine site.

It belongs to the methyltransferase superfamily. RsmH family.

The protein resides in the cytoplasm. It carries out the reaction cytidine(1402) in 16S rRNA + S-adenosyl-L-methionine = N(4)-methylcytidine(1402) in 16S rRNA + S-adenosyl-L-homocysteine + H(+). In terms of biological role, specifically methylates the N4 position of cytidine in position 1402 (C1402) of 16S rRNA. The polypeptide is Ribosomal RNA small subunit methyltransferase H (Treponema denticola (strain ATCC 35405 / DSM 14222 / CIP 103919 / JCM 8153 / KCTC 15104)).